A 121-amino-acid chain; its full sequence is Large ribosomal subunit protein bL12 (121 aa).

The protein belongs to the bacterial ribosomal protein bL12 family. Homodimer. Part of the ribosomal stalk of the 50S ribosomal subunit. Forms a multimeric L10(L12)X complex, where L10 forms an elongated spine to which 2 to 4 L12 dimers bind in a sequential fashion. Binds GTP-bound translation factors.

Its function is as follows. Forms part of the ribosomal stalk which helps the ribosome interact with GTP-bound translation factors. Is thus essential for accurate translation. This chain is Large ribosomal subunit protein bL12, found in Escherichia coli O81 (strain ED1a).